Here is a 304-residue protein sequence, read N- to C-terminus: Acetylxylan esterase A (304 aa).

The first 24 residues, 1–24 (MLLSTHLLFVITTLVTSLLHPIDG), serve as a signal peptide directing secretion. The active-site Charge relay system is the Ser148. N-linked (GlcNAc...) asparagine glycosylation is present at Asn190.

Belongs to the carbohydrate esterase 1 (CE1) family. AxeA subfamily. In terms of assembly, monomer.

The protein resides in the secreted. It carries out the reaction Deacetylation of xylans and xylo-oligosaccharides.. The protein operates within glycan degradation; xylan degradation. Inactivated by di-isopropylfluorophosphate and phenylmethylsulfonylfluorid (PMSF), a specific inhibitor of serine esterases. In terms of biological role, acetylxylan esterase involved in the hydrolysis of xylan, a major structural heterogeneous polysaccharide found in plant biomass representing the second most abundant polysaccharide in the biosphere, after cellulose. Degrades acetylated xylans by cleaving acetyl side groups from the hetero-xylan backbone. This Aspergillus awamori (Black koji mold) protein is Acetylxylan esterase A (axeA).